The sequence spans 607 residues: Acyl-coenzyme A thioesterase 11 (607 aa).

A mitochondrion-targeting transit peptide spans 1–13 (MIQNVGNHLRRGL). 2 positions are modified to phosphoserine: Ser-15 and Ser-25. The HotDog ACOT-type 1 domain occupies 43 to 155 (NPTEVQMSQL…LATFVARREI (113 aa)). CoA contacts are provided by residues 91–93 (TAS), 120–122 (NSS), Arg-181, and 271–273 (HFR). A HotDog ACOT-type 2 domain is found at 216–329 (EKTRVESVEL…FMTFVVLDAD (114 aa)). One can recognise an START domain in the interval 375–585 (LSVPWDPSNQ…GWNGKLAGGH (211 aa)).

In terms of tissue distribution, isoform 1 is predominantly expressed in skeletal muscle, liver, testis, stomach, spleen, lung and brain. Isoform 2 is predominantly expressed in kidney, uterus, hibernoma and white adipose tissue.

Its subcellular location is the mitochondrion matrix. The protein resides in the cytoplasm. The catalysed reaction is hexadecanoyl-CoA + H2O = hexadecanoate + CoA + H(+). It catalyses the reaction tetradecanoyl-CoA + H2O = tetradecanoate + CoA + H(+). The enzyme catalyses dodecanoyl-CoA + H2O = dodecanoate + CoA + H(+). It carries out the reaction butanoyl-CoA + H2O = butanoate + CoA + H(+). It functions in the pathway lipid metabolism; fatty acid metabolism. Functionally, has an acyl-CoA thioesterase activity with a preference for the long chain fatty acyl-CoA thioesters hexadecanoyl-CoA/palmitoyl-CoA and tetradecanoyl-CoA/myristoyl-CoA which are the main substrates in the mitochondrial beta-oxidation pathway. This is Acyl-coenzyme A thioesterase 11 (ACOT11) from Homo sapiens (Human).